A 62-amino-acid chain; its full sequence is Endoregulin (62 aa).

Residues leucine 25 to phenylalanine 45 form a helical membrane-spanning segment.

As to quaternary structure, homooligomer. Can also form heterooligomers with other sarcoplasmic/endoplasmic reticulum calcium ATPase (SERCA) regulators ARLN, PLN, SLN and STRIT1/DWORF. Monomer. Interacts as a monomer with ATP2A2/SERCA2; the interaction results in inhibition of ATP2A2 Ca(2+) affinity.

It localises to the endoplasmic reticulum membrane. Its function is as follows. Inhibits the activity of the calcium ATPases ATP2A2/SERCA2 and ATP2A3/SERCA3 by decreasing their apparent affinity for Ca(2+). In Homo sapiens (Human), this protein is Endoregulin.